We begin with the raw amino-acid sequence, 58 residues long: MHSSVFILILFSLAVINPIFFDMKVEAGCMKEYCAGQCRGKVSQDYCLKHCKCIPRFI.

An N-terminal signal peptide occupies residues 1–16 (MHSSVFILILFSLAVI). 3 cysteine pairs are disulfide-bonded: cysteine 29–cysteine 51, cysteine 34–cysteine 47, and cysteine 38–cysteine 53.

In terms of tissue distribution, expressed by the venom gland.

It localises to the secreted. Functionally, blocks potassium channels. This is Potassium channel toxin Ts16 from Tityus serrulatus (Brazilian scorpion).